A 220-amino-acid polypeptide reads, in one-letter code: Metalloproteinase inhibitor 2 (220 aa).

A signal peptide spans 1–26; it reads MGAAARSLRLALGLLLLATLLRPADA. Cys27 serves as a coordination point for Zn(2+). 2 involved in metalloproteinase-binding regions span residues 27–30 and 95–96; these read CSCS and SA. Disulfide bonds link Cys27–Cys98, Cys29–Cys127, Cys39–Cys152, Cys154–Cys201, Cys159–Cys164, and Cys172–Cys193. Positions 27 to 152 constitute an NTR domain; sequence CSCSPVHPQQ…SLNHRYQMGC (126 aa).

Belongs to the protease inhibitor I35 (TIMP) family. Interacts (via the C-terminal) with MMP2 (via the C-terminal PEX domain); the interaction inhibits the MMP2 activity. In terms of processing, the activity of TIMP2 is dependent on the presence of disulfide bonds.

Its subcellular location is the secreted. Its function is as follows. Complexes with metalloproteinases (such as collagenases) and irreversibly inactivates them by binding to their catalytic zinc cofactor. This chain is Metalloproteinase inhibitor 2 (Timp2), found in Rattus norvegicus (Rat).